We begin with the raw amino-acid sequence, 260 residues long: UPF0328 protein ECU07_1870/ECU10_0030 (260 aa).

Belongs to the UPF0328 family.

The protein is UPF0328 protein ECU07_1870/ECU10_0030 of Encephalitozoon cuniculi (strain GB-M1) (Microsporidian parasite).